The primary structure comprises 92 residues: Small ribosomal subunit protein uS19 (92 aa).

It belongs to the universal ribosomal protein uS19 family.

Functionally, protein S19 forms a complex with S13 that binds strongly to the 16S ribosomal RNA. The sequence is that of Small ribosomal subunit protein uS19 from Rhodospirillum rubrum (strain ATCC 11170 / ATH 1.1.1 / DSM 467 / LMG 4362 / NCIMB 8255 / S1).